Consider the following 238-residue polypeptide: Orotidine 5'-phosphate decarboxylase (238 aa).

Residues Asp10, Lys32, 59–68, Thr122, Arg184, Gln193, Gly213, and Arg214 contribute to the substrate site; that span reads DLKLHDIPNT. The active-site Proton donor is Lys61.

It belongs to the OMP decarboxylase family. Type 1 subfamily. In terms of assembly, homodimer.

It catalyses the reaction orotidine 5'-phosphate + H(+) = UMP + CO2. The protein operates within pyrimidine metabolism; UMP biosynthesis via de novo pathway; UMP from orotate: step 2/2. Catalyzes the decarboxylation of orotidine 5'-monophosphate (OMP) to uridine 5'-monophosphate (UMP). The protein is Orotidine 5'-phosphate decarboxylase of Bacillus cereus (strain Q1).